The sequence spans 40 residues: Protein P4 (40 aa).

The helical transmembrane segment at 10 to 29 (KYFAYGVAISAAGAILAEYV) threads the bilayer.

The protein resides in the virion membrane. In terms of biological role, may interact with the viral DNA. The chain is Protein P4 (IV) from Pseudoalteromonas phage PM2 (Bacteriophage PM2).